Consider the following 300-residue polypeptide: Actin-related protein 2/3 complex subunit 2-A (300 aa).

Belongs to the ARPC2 family. As to quaternary structure, component of the Arp2/3 complex composed of actr2/arp2, actr3/arp3, arpc1 (arpc1a or arpc1b), arpc2, arpc3, arpc4 and arpc5.

The protein resides in the cytoplasm. The protein localises to the cytoskeleton. It localises to the cell projection. Its subcellular location is the nucleus. Actin-binding component of the Arp2/3 complex, a multiprotein complex that mediates actin polymerization upon stimulation by nucleation-promoting factor (NPF). The Arp2/3 complex mediates the formation of branched actin networks in the cytoplasm, providing the force for cell motility. In addition to its role in the cytoplasmic cytoskeleton, the Arp2/3 complex also promotes actin polymerization in the nucleus, thereby regulating gene transcription and repair of damaged DNA. The Arp2/3 complex promotes homologous recombination (HR) repair in response to DNA damage by promoting nuclear actin polymerization, leading to drive motility of double-strand breaks (DSBs). In Xenopus laevis (African clawed frog), this protein is Actin-related protein 2/3 complex subunit 2-A (arpc2-a).